The primary structure comprises 185 residues: Elongation factor P (185 aa).

Belongs to the elongation factor P family.

The protein resides in the cytoplasm. It functions in the pathway protein biosynthesis; polypeptide chain elongation. Functionally, involved in peptide bond synthesis. Stimulates efficient translation and peptide-bond synthesis on native or reconstituted 70S ribosomes in vitro. Probably functions indirectly by altering the affinity of the ribosome for aminoacyl-tRNA, thus increasing their reactivity as acceptors for peptidyl transferase. The polypeptide is Elongation factor P (Clostridium botulinum (strain ATCC 19397 / Type A)).